Consider the following 258-residue polypeptide: Aspartate/glutamate leucyltransferase (258 aa).

This sequence belongs to the R-transferase family. Bpt subfamily.

The protein localises to the cytoplasm. It catalyses the reaction N-terminal L-glutamyl-[protein] + L-leucyl-tRNA(Leu) = N-terminal L-leucyl-L-glutamyl-[protein] + tRNA(Leu) + H(+). The enzyme catalyses N-terminal L-aspartyl-[protein] + L-leucyl-tRNA(Leu) = N-terminal L-leucyl-L-aspartyl-[protein] + tRNA(Leu) + H(+). Its function is as follows. Functions in the N-end rule pathway of protein degradation where it conjugates Leu from its aminoacyl-tRNA to the N-termini of proteins containing an N-terminal aspartate or glutamate. This Bradyrhizobium diazoefficiens (strain JCM 10833 / BCRC 13528 / IAM 13628 / NBRC 14792 / USDA 110) protein is Aspartate/glutamate leucyltransferase.